The primary structure comprises 179 residues: MGDKKSPTRPKRQPKPASDEGYWDCSVCTFRNSAEAFKCMMCDVRKGTSTRKPRPVSQLVAQQVTQQFVPPTQSKKEKKDRVEKDKSEKEAASKKNCHKKTRPRLKNVDRSSAQHLEVTVGDLTVIITDFKEKAKSAPASSAAGDQHSQGSCSSDSTERGVSRSSSPRGEASSLNGESH.

Disordered stretches follow at residues Met1 to Trp23, Gly47 to Glu117, and Lys133 to His179. The RanBP2-type zinc finger occupies Asp19–Thr48. The span at Gln62 to Gln73 shows a compositional bias: low complexity. Positions Ser74–Ser93 are enriched in basic and acidic residues. Over residues Lys95 to Leu105 the composition is skewed to basic residues. Over residues Gln146–Asp155 the composition is skewed to polar residues. Residues Ser162–Ser173 are compositionally biased toward low complexity. Phosphoserine is present on Ser166.

Interacts with MYC, MYCN, RNF2/RING1B and YY1. Part of the E2F6.com-1 complex in G0 phase composed of E2F6, MGA, MAX, TFDP1, CBX3, BAT8, EUHMTASE1, RING1, RNF2, MBLR, L3MBTL2 and YAF2. In terms of tissue distribution, in the mesoderm, expressed in the region close to the surface ectoderm.

It is found in the nucleus. Binds to MYC and inhibits MYC-mediated transactivation. Also binds to MYCN and enhances MYCN-dependent transcriptional activation. Increases calpain 2-mediated proteolysis of YY1 in vitro. Component of the E2F6.com-1 complex, a repressive complex that methylates 'Lys-9' of histone H3, suggesting that it is involved in chromatin-remodeling. This is YY1-associated factor 2 (Yaf2) from Mus musculus (Mouse).